The following is a 156-amino-acid chain: ATP synthase subunit b (156 aa).

Residues 7 to 29 (LFGQTIAFAIFVWFCMKFVWPPL) form a helical membrane-spanning segment.

It belongs to the ATPase B chain family. In terms of assembly, F-type ATPases have 2 components, F(1) - the catalytic core - and F(0) - the membrane proton channel. F(1) has five subunits: alpha(3), beta(3), gamma(1), delta(1), epsilon(1). F(0) has three main subunits: a(1), b(2) and c(10-14). The alpha and beta chains form an alternating ring which encloses part of the gamma chain. F(1) is attached to F(0) by a central stalk formed by the gamma and epsilon chains, while a peripheral stalk is formed by the delta and b chains.

It localises to the cell inner membrane. Functionally, f(1)F(0) ATP synthase produces ATP from ADP in the presence of a proton or sodium gradient. F-type ATPases consist of two structural domains, F(1) containing the extramembraneous catalytic core and F(0) containing the membrane proton channel, linked together by a central stalk and a peripheral stalk. During catalysis, ATP synthesis in the catalytic domain of F(1) is coupled via a rotary mechanism of the central stalk subunits to proton translocation. In terms of biological role, component of the F(0) channel, it forms part of the peripheral stalk, linking F(1) to F(0). The sequence is that of ATP synthase subunit b from Ectopseudomonas mendocina (strain ymp) (Pseudomonas mendocina).